A 98-amino-acid polypeptide reads, in one-letter code: Large ribosomal subunit protein uL23 (98 aa).

Belongs to the universal ribosomal protein uL23 family. In terms of assembly, part of the 50S ribosomal subunit. Contacts protein L29, and trigger factor when it is bound to the ribosome.

Functionally, one of the early assembly proteins it binds 23S rRNA. One of the proteins that surrounds the polypeptide exit tunnel on the outside of the ribosome. Forms the main docking site for trigger factor binding to the ribosome. In Rickettsia rickettsii (strain Iowa), this protein is Large ribosomal subunit protein uL23.